The primary structure comprises 402 residues: MQMSSALACLILGLVLVSGKGFTLPLRESHTAHQATDFGVKVFQQVVQASKDRNVVFSPYGVSSVLAMLQMTTAGKTRRQIQDAMGFKVNEKGTAHALRQLSKELMGPWNKNEISTADAIFVQRDLELVQGFMPHFFKLFQTMVKQVDFSEVERARFIINDWVERHTKGMINDLLAKGAVDELTRLVLVNALYFSGQWKTPFLEASTHQRLFHKSDGSTVSVPMMAQSNKFNYTEFTTPDGLEYDVVELPYQRDTLSMFIAAPFEKDVHLSALTNILDAELIRQWKGNMTRLPRLLILPKFSLETEVDLRGPLEKLGMPDMFSATLADFTSLSDQEQLSVAQALQKVRIEVNESGTVASSSTAFVISARMAPTEMVIDRSFLFVVRHNPTETILFMGQVMEP.

Positions 1–22 (MQMSSALACLILGLVLVSGKGF) are cleaved as a signal peptide. Asn-232, Asn-288, and Asn-352 each carry an N-linked (GlcNAc...) asparagine glycan.

This sequence belongs to the serpin family. Forms a heterodimer with TMPRSS7. Interacts with VTN. Binds LRP1B; binding is followed by internalization and degradation. Interacts with PPP1CB. In complex with PLAU/uPA, interacts with PLAUR/uPAR. Interacts with SORL1 and LRP1, either alone or in complex with PLAU; these interactions are abolished in the presence of LRPAP1/RAP. The ternary complex composed of PLAUR-PLAU-PAI1 also interacts with SORL1. Interacts with PLAT/tPA. Also interacts with SORL1, when complexed to PLAT/tPA.

Its subcellular location is the secreted. Serine protease inhibitor. Inhibits TMPRSS7. Is a primary inhibitor of tissue-type plasminogen activator (PLAT) and urokinase-type plasminogen activator (PLAU). As PLAT inhibitor, it is required for fibrinolysis down-regulation and is responsible for the controlled degradation of blood clots. As PLAU inhibitor, it is involved in the regulation of cell adhesion and spreading. Acts as a regulator of cell migration, independently of its role as protease inhibitor. It is required for stimulation of keratinocyte migration during cutaneous injury repair. Involved in cellular and replicative senescence. Plays a role in alveolar type 2 cells senescence in the lung. Is involved in the regulation of cementogenic differentiation of periodontal ligament stem cells, and regulates odontoblast differentiation and dentin formation during odontogenesis. This is Plasminogen activator inhibitor 1 (Serpine1) from Mus musculus (Mouse).